The sequence spans 163 residues: Putative MucR family transcriptional regulatory protein RA0938 (163 aa).

This sequence belongs to the ros/MucR family.

This chain is Putative MucR family transcriptional regulatory protein RA0938, found in Rhizobium meliloti (strain 1021) (Ensifer meliloti).